The primary structure comprises 278 residues: Large ribosomal subunit protein uL2 (278 aa).

3 disordered regions span residues 1–20, 25–58, and 223–278; these read MGIRKYKPTTPGRRGASVSD, TRSTPEKSLVRPLHGKGGRNAHGRITTRHKGGGH, and GVVM…GKKR. A compositionally biased stretch (basic residues) spans 37 to 58; it reads LHGKGGRNAHGRITTRHKGGGH. Residues 253–268 are compositionally biased toward basic and acidic residues; the sequence is PEGRTRKPNKPSDKLI. Positions 269–278 are enriched in basic residues; sequence VRRRRTGKKR.

It belongs to the universal ribosomal protein uL2 family. In terms of assembly, part of the 50S ribosomal subunit. Forms a bridge to the 30S subunit in the 70S ribosome.

In terms of biological role, one of the primary rRNA binding proteins. Required for association of the 30S and 50S subunits to form the 70S ribosome, for tRNA binding and peptide bond formation. It has been suggested to have peptidyltransferase activity; this is somewhat controversial. Makes several contacts with the 16S rRNA in the 70S ribosome. This is Large ribosomal subunit protein uL2 from Mycolicibacterium smegmatis (strain ATCC 700084 / mc(2)155) (Mycobacterium smegmatis).